The following is a 687-amino-acid chain: Ribosomal RNA processing protein 1 homolog (687 aa).

Positions 288–298 are enriched in acidic residues; that stretch reads DEEDDEVNAEE. 2 disordered regions span residues 288-312 and 463-624; these read DEEDDEVNAEEEQPRATSLDPRAGN and VKEA…GSGK. 3 stretches are compositionally biased toward basic and acidic residues: residues 463-488, 497-520, and 527-543; these read VKEAEPKSKKAKKEEPPQQNKDDQTK, PKNDQSKPKIEDQPTLKAEKEEPA, and HSKTKEEQSKPKTDEQP. A compositionally biased stretch (low complexity) spans 554–564; the sequence is KAKPTPKTKAA. Residues 596-608 are compositionally biased toward polar residues; sequence KQANSKLPQSTPK. Thr617 and Thr620 each carry phosphothreonine. Ser622 bears the Phosphoserine mark.

Belongs to the RRP1 family.

Its subcellular location is the nucleus. May be involved in the generation of 28S rRNA. The sequence is that of Ribosomal RNA processing protein 1 homolog (Nnp-1) from Drosophila melanogaster (Fruit fly).